Here is a 274-residue protein sequence, read N- to C-terminus: Transcriptional activator PerA (274 aa).

One can recognise an HTH araC/xylS-type domain in the interval 168–265 (DRVIKVIELD…NTTPKKYNGV (98 aa)). DNA-binding regions (H-T-H motif) lie at residues 185–206 (GDVS…NKEN) and 232–255 (IDEI…KEYY).

Functionally, could help in the transcriptional activator of eaeA expression in enteropathogenic E.coli. However, it seems that it is PerC which acts as an activator. The protein is Transcriptional activator PerA (perA) of Escherichia coli O127:H6 (strain E2348/69 / EPEC).